Here is a 538-residue protein sequence, read N- to C-terminus: MFS-type transporter oryC (538 aa).

A run of 6 helical transmembrane segments spans residues 14–34 (LTGGWLTFWVTVACATDMSLF), 67–87 (TVTAIYDVGCFFGAIVAFTIG), 96–116 (ILLGTTIMAIGAVLQAASFSL), 120–140 (FVGRIILGIGNGINTATAPIW), 162–182 (IFGFCLVNWINYGLSFVGGSI), and 186–206 (FPLAFQFFFLIILWSTTPWLP). The N-linked (GlcNAc...) asparagine glycan is linked to Asn-268. 6 helical membrane-spanning segments follow: residues 288-308 (FGGINIMSYYLPTVLMDSVGL), 315-335 (LLAACNALSYLVFSGLAVLLV), 342-362 (GLMLLSTFGQFLCFLIITILL), 379-399 (VAFFFLYYGAFGIGMLGVPWL), 416-436 (VATATDWITNFVVVEITPIGI), and 443-463 (FWIVWTVTNAAFLPILYFLYP). N-linked (GlcNAc...) asparagine glycosylation occurs at Asn-467.

Belongs to the major facilitator superfamily. Sugar transporter (TC 2.A.1.1) family.

The protein localises to the membrane. Functionally, MFS-type transporter; part of the gene cluster that mediates the biosynthesis of oryzines, natural products with an unusual maleidride backbone. The chain is MFS-type transporter oryC from Aspergillus oryzae (strain ATCC 42149 / RIB 40) (Yellow koji mold).